Here is a 225-residue protein sequence, read N- to C-terminus: Small ribosomal subunit protein uS3 (225 aa).

The KH type-2 domain maps to 16–85; the sequence is VCEYVVKETE…TPQIEVKDVK (70 aa). Residues 202–225 form a disordered region; it reads EVGTESKADQTDVEGRETGNAEES. Residues 205-225 are compositionally biased toward basic and acidic residues; that stretch reads TESKADQTDVEGRETGNAEES.

This sequence belongs to the universal ribosomal protein uS3 family. Part of the 30S ribosomal subunit.

Functionally, binds the lower part of the 30S subunit head. The protein is Small ribosomal subunit protein uS3 of Thermoplasma acidophilum (strain ATCC 25905 / DSM 1728 / JCM 9062 / NBRC 15155 / AMRC-C165).